Consider the following 630-residue polypeptide: Conserved oligomeric Golgi complex subunit 6 (630 aa).

It belongs to the COG6 family. As to quaternary structure, component of the conserved oligomeric Golgi complex which is composed of eight different subunits and is required for normal Golgi morphology and localization.

It is found in the golgi apparatus membrane. Functionally, required for normal Golgi function. In Drosophila melanogaster (Fruit fly), this protein is Conserved oligomeric Golgi complex subunit 6.